The following is a 127-amino-acid chain: MPSCDPGPGPACLPTKTFRSYLPRCHRTYSCVHCRAHLAKHDELISKSFQGSHGRAYLFNSVVNVGCGPAEQRLLLTGLHSVADIFCESCKTTLGWKYEQAFETSQKYKEGKYIIEMSHMVKDNGWD.

The region spanning 27-124 (RTYSCVHCRA…IEMSHMVKDN (98 aa)) is the Yippee domain. 4 residues coordinate Zn(2+): Cys-31, Cys-34, Cys-87, and Cys-90. Phosphothreonine occurs at positions 92 and 93. Residue Tyr-98 is modified to Phosphotyrosine.

It belongs to the yippee family.

It localises to the nucleus. The protein resides in the nucleolus. The chain is Protein yippee-like 4 (YPEL4) from Chlorocebus aethiops (Green monkey).